A 2227-amino-acid chain; its full sequence is Genome polyprotein (2227 aa).

2 short sequence motifs ((L)YPX(n)L motif) span residues 167–171 (YPHGL) and 200–205 (YPVWEL). The interval 766–836 (MMSRIAAGDL…PRKMKGLFSQ (71 aa)) is involved in P1-2A pentamerization. A helical transmembrane segment spans residues 1010-1030 (VTVEIINTVLCFVKSGILLYV). The interval 1043–1070 (IGLLRVMNYADIGCSVISCGKVFSKMLE) is membrane-penetrating ability. The stretch at 1127-1152 (KKKDVLNVLKDNQQKIERAIEEADNF) forms a coiled coil. The 163-residue stretch at 1204–1366 (HQKLKNLGSI…SFFKNPHNDM (163 aa)) folds into the SF3 helicase domain. 1230-1237 (GKRGGGKS) is a binding site for ATP. A helical transmembrane segment spans residues 1462-1482 (WVAVGAAVGILGVLVGGWFVY). The residue at position 1499 (Tyr-1499) is an O-(5'-phospho-RNA)-tyrosine. A Peptidase C3 domain is found at 1514–1728 (DPVESQSTLE…VAKLVTQEMF (215 aa)). Residues His-1563, Asp-1603, and Cys-1691 each act as for protease 3C activity in the active site. Positions 1976–2097 (DVGLDLDFSA…VFSRDIQIDN (122 aa)) constitute a RdRp catalytic domain. Asp-2083 serves as the catalytic For RdRp activity.

This sequence belongs to the picornaviridae polyprotein family. In terms of assembly, homodimer. Homomultimer; probably interacts with membranes in a multimeric form. Seems to assemble into amyloid-like fibers. As to quaternary structure, homodimer. Monomer. Interacts with protein 3CD. Interacts with host ACBD3. In terms of assembly, interacts with protein 3AB. As to quaternary structure, interacts with human MAVS. Homodimer; disulfide-linked. In terms of assembly, homopentamer. Homooligomer. As to quaternary structure, interacts with capsid protein VP2. Interacts with capsid protein VP3. Interacts with capsid protein VP1. Interacts with capsid protein VP3. In terms of assembly, interacts with capsid protein VP1. Interacts with capsid protein VP2. Post-translationally, specific enzymatic cleavages by viral protease in vivo yield a variety of precursors and mature proteins. Polyprotein processing intermediates are produced, such as P1-2A which is a functional precursor of the structural proteins, VP0 which is a VP4-VP2 precursor, VP1-2A precursor, 3ABC precursor which is a stable and catalytically active precursor of 3A, 3B and 3C proteins, 3AB and 3CD precursors. The assembly signal 2A is removed from VP1-2A by a host protease, possibly host Cathepsin L. This cleavage occurs over a region of 3 amino-acids probably generating VP1 proteins with heterogeneous C-termini. During virion maturation, immature virions are rendered infectious following cleavage of VP0 into VP4 and VP2. This maturation seems to be an autocatalytic event triggered by the presence of RNA in the capsid and is followed by a conformational change of the particle. In terms of processing, the assembly signal 2A is removed from VP1-2A by a host protease, possibly host Cathepsin L in naked virions. This cleavage does not occur in enveloped virions. This cleavage occurs over a region of 3 amino-acids probably generating VP1 proteins with heterogeneous C-termini. Post-translationally, VPg is uridylylated prior to priming replication into VPg-pUpU. Unlike other picornaviruses, does not seem to be myristoylated.

Its subcellular location is the virion. The protein resides in the host endosome. It localises to the host multivesicular body. The protein localises to the host membrane. It is found in the host mitochondrion outer membrane. Its subcellular location is the host cytoplasm. The protein resides in the host cytoplasmic vesicle membrane. The enzyme catalyses RNA(n) + a ribonucleoside 5'-triphosphate = RNA(n+1) + diphosphate. It carries out the reaction a ribonucleoside 5'-triphosphate + H2O = a ribonucleoside 5'-diphosphate + phosphate + H(+). The catalysed reaction is Selective cleavage of Gln-|-Gly bond in the poliovirus polyprotein. In other picornavirus reactions Glu may be substituted for Gln, and Ser or Thr for Gly.. Functionally, capsid proteins VP1, VP2, and VP3 form a closed capsid enclosing the viral positive strand RNA genome. All these proteins contain a beta-sheet structure called beta-barrel jelly roll. Together they form an icosahedral capsid (T=3) composed of 60 copies of each VP1, VP2, and VP3, with a diameter of approximately 300 Angstroms. VP1 is situated at the 12 fivefold axes, whereas VP2 and VP3 are located at the quasi-sixfold axes. The naked capsid interacts with the host receptor HAVCR1 to provide virion attachment to and probably entry into the target cell. VP0 precursor is a component of the immature procapsids. In terms of biological role, plays a role in the assembly of the 12 pentamers into an icosahedral structure. Has not been detected in mature virions, supposedly owing to its small size. Its function is as follows. Precursor component of immature procapsids that corresponds to an extended form of the structural protein VP1. After maturation, possibly by the host Cathepsin L, the assembly signal 2A is cleaved to give rise to the mature VP1 protein. Functionally, functions as a viroporin. Affects membrane integrity and causes an increase in membrane permeability. Involved in host intracellular membrane rearrangements probably to give rise to the viral factories. Does not disrupt calcium homeostasis or glycoprotein trafficking. Antagonizes the innate immune response of the host by suppressing IFN-beta synthesis, which it achieves by interfering with the RIG-I/IFIH1 pathway. Affects membrane integrity and causes an increase in membrane permeability. In terms of biological role, associates with and induces structural rearrangements of intracellular membranes. Displays RNA-binding activity. Its function is as follows. The precursor 3ABC is targeted to the mitochondrial membrane where protease 3C activity cleaves and inhibits the host antiviral protein MAVS, thereby disrupting activation of IRF3 through the IFIH1/MDA5 pathway. In vivo, the protease activity of 3ABC precursor is more efficient in cleaving the 2BC precursor than that of protein 3C. The 3ABC precursor may therefore play a role in the proteolytic processing of the polyprotein. Possible viroporin. Functionally, interacts with the 3CD precursor and with RNA structures found at both the 5'- and 3'-termini of the viral genome. Since the 3AB precursor contains the hydrophobic domain 3A, it probably anchors the whole viral replicase complex to intracellular membranes on which viral RNA synthesis occurs. May serve as membrane anchor to the 3AB and 3ABC precursors via its hydrophobic domain. May interact with RNA. In terms of biological role, acts as a primer for viral RNA replication and remains covalently bound to viral genomic RNA. VPg is uridylylated prior to priming replication into VPg-pUpU. The VPg-pUpU is then used as primer on the genomic RNA poly(A) by the RNA-dependent RNA polymerase to replicate the viral genome. Its function is as follows. Cysteine protease that generates mature viral proteins from the precursor polyprotein. In addition to its proteolytic activity, it binds to viral RNA, and thus influences viral genome replication. RNA and substrate bind cooperatively to the protease. Cleaves IKBKG/NEMO to impair innate immune signaling. Cleaves host PABPC1 which may participate in the switch of viral translation to RNA synthesis. Functionally, interacts with the 3AB precursor and with RNA structures found at both the 5'- and 3'-termini of the viral genome. Disrupts TLR3 signaling by degrading the host adapter protein TICAM1/TRIF. RNA-directed RNA polymerase 3D-POL replicates genomic and antigenomic RNA by recognizing replications specific signals. The sequence is that of Genome polyprotein from Human hepatitis A virus genotype IIB (isolate SLF88) (HHAV).